Reading from the N-terminus, the 90-residue chain is Small ribosomal subunit protein bS18 (90 aa).

Belongs to the bacterial ribosomal protein bS18 family. Part of the 30S ribosomal subunit. Forms a tight heterodimer with protein bS6.

Binds as a heterodimer with protein bS6 to the central domain of the 16S rRNA, where it helps stabilize the platform of the 30S subunit. This Bordetella petrii (strain ATCC BAA-461 / DSM 12804 / CCUG 43448) protein is Small ribosomal subunit protein bS18.